The primary structure comprises 89 residues: Small ribosomal subunit protein uS15 (89 aa).

This sequence belongs to the universal ribosomal protein uS15 family. In terms of assembly, part of the 30S ribosomal subunit. Forms a bridge to the 50S subunit in the 70S ribosome, contacting the 23S rRNA.

In terms of biological role, one of the primary rRNA binding proteins, it binds directly to 16S rRNA where it helps nucleate assembly of the platform of the 30S subunit by binding and bridging several RNA helices of the 16S rRNA. Its function is as follows. Forms an intersubunit bridge (bridge B4) with the 23S rRNA of the 50S subunit in the ribosome. This Coxiella burnetii (strain CbuK_Q154) (Coxiella burnetii (strain Q154)) protein is Small ribosomal subunit protein uS15.